Here is a 175-residue protein sequence, read N- to C-terminus: Adenylyl-sulfate kinase (175 aa).

Residue 12–19 participates in ATP binding; that stretch reads GLSGAGKT. Ser86 (phosphoserine intermediate) is an active-site residue.

This sequence belongs to the APS kinase family.

The enzyme catalyses adenosine 5'-phosphosulfate + ATP = 3'-phosphoadenylyl sulfate + ADP + H(+). Its pathway is sulfur metabolism; hydrogen sulfide biosynthesis; sulfite from sulfate: step 2/3. Catalyzes the synthesis of activated sulfate. The protein is Adenylyl-sulfate kinase of Synechococcus sp. (strain JA-2-3B'a(2-13)) (Cyanobacteria bacterium Yellowstone B-Prime).